The chain runs to 543 residues: Zinc metalloproteinase (543 aa).

The first 24 residues, 1-24, serve as a signal peptide directing secretion; that stretch reads MHPNYYLSPLAVAIALGIASPVKA. Residues 25-207 constitute a propeptide that is removed on maturation; that stretch reads ADPIPLQKSS…PFVQWDDVKT (183 aa). His377 is a Zn(2+) binding site. Residue Glu378 is part of the active site. Zn(2+)-binding residues include His381 and Glu401. Catalysis depends on His463, which acts as the Proton donor.

It belongs to the peptidase M4 family. Requires Zn(2+) as cofactor.

The protein resides in the secreted. Cleaves collagen, gelatin, casein, alpha-1-antitrypsin, and bovine insulin. May play a role in the pathogenesis of legionnaires disease. This chain is Zinc metalloproteinase, found in Legionella pneumophila.